We begin with the raw amino-acid sequence, 257 residues long: Imidazole glycerol phosphate synthase subunit HisF (257 aa).

Catalysis depends on residues aspartate 11 and aspartate 130.

Belongs to the HisA/HisF family. In terms of assembly, heterodimer of HisH and HisF.

Its subcellular location is the cytoplasm. The catalysed reaction is 5-[(5-phospho-1-deoxy-D-ribulos-1-ylimino)methylamino]-1-(5-phospho-beta-D-ribosyl)imidazole-4-carboxamide + L-glutamine = D-erythro-1-(imidazol-4-yl)glycerol 3-phosphate + 5-amino-1-(5-phospho-beta-D-ribosyl)imidazole-4-carboxamide + L-glutamate + H(+). Its pathway is amino-acid biosynthesis; L-histidine biosynthesis; L-histidine from 5-phospho-alpha-D-ribose 1-diphosphate: step 5/9. In terms of biological role, IGPS catalyzes the conversion of PRFAR and glutamine to IGP, AICAR and glutamate. The HisF subunit catalyzes the cyclization activity that produces IGP and AICAR from PRFAR using the ammonia provided by the HisH subunit. The chain is Imidazole glycerol phosphate synthase subunit HisF from Shewanella woodyi (strain ATCC 51908 / MS32).